We begin with the raw amino-acid sequence, 316 residues long: Methionyl-tRNA formyltransferase (316 aa).

G112–P115 contacts (6S)-5,6,7,8-tetrahydrofolate.

This sequence belongs to the Fmt family.

The catalysed reaction is L-methionyl-tRNA(fMet) + (6R)-10-formyltetrahydrofolate = N-formyl-L-methionyl-tRNA(fMet) + (6S)-5,6,7,8-tetrahydrofolate + H(+). Its function is as follows. Attaches a formyl group to the free amino group of methionyl-tRNA(fMet). The formyl group appears to play a dual role in the initiator identity of N-formylmethionyl-tRNA by promoting its recognition by IF2 and preventing the misappropriation of this tRNA by the elongation apparatus. This is Methionyl-tRNA formyltransferase from Chlamydia muridarum (strain MoPn / Nigg).